The sequence spans 172 residues: Methylated-DNA--protein-cysteine methyltransferase (172 aa).

Cys-142 (nucleophile; methyl group acceptor) is an active-site residue.

This sequence belongs to the MGMT family.

The protein resides in the cytoplasm. It catalyses the reaction a 6-O-methyl-2'-deoxyguanosine in DNA + L-cysteinyl-[protein] = S-methyl-L-cysteinyl-[protein] + a 2'-deoxyguanosine in DNA. The catalysed reaction is a 4-O-methyl-thymidine in DNA + L-cysteinyl-[protein] = a thymidine in DNA + S-methyl-L-cysteinyl-[protein]. Its function is as follows. Involved in the cellular defense against the biological effects of O6-methylguanine (O6-MeG) and O4-methylthymine (O4-MeT) in DNA. Repairs the methylated nucleobase in DNA by stoichiometrically transferring the methyl group to a cysteine residue in the enzyme. This is a suicide reaction: the enzyme is irreversibly inactivated. The chain is Methylated-DNA--protein-cysteine methyltransferase from Pyrococcus horikoshii (strain ATCC 700860 / DSM 12428 / JCM 9974 / NBRC 100139 / OT-3).